A 248-amino-acid chain; its full sequence is Anamorsin homolog (248 aa).

Positions 4–129 are N-terminal SAM-like domain; sequence FKGLQKSLYI…ETGSSARLSF (126 aa). A linker region spans residues 130–161; it reads AKKNANAVNVWKISGDDEELIDEEELLDEEDK. [2Fe-2S] cluster-binding residues include Cys172, Cys181, Cys184, and Cys186. Positions 172–186 are fe-S binding site A; the sequence is CSTTGKRKACKNCSC. [4Fe-4S] cluster-binding residues include Cys209, Cys212, Cys220, and Cys223. Short sequence motifs (cx2C motif) lie at residues 209-212 and 220-223; these read CGNC and CSTC. Residues 209 to 223 form a fe-S binding site B region; the sequence is CGNCYLGDAFRCSTC.

The protein belongs to the anamorsin family. In terms of assembly, monomer. Requires [2Fe-2S] cluster as cofactor. [4Fe-4S] cluster serves as cofactor.

Its subcellular location is the cytoplasm. It is found in the mitochondrion intermembrane space. Its function is as follows. Component of the cytosolic iron-sulfur (Fe-S) protein assembly (CIA) machinery. Required for the maturation of extramitochondrial Fe-S proteins. Part of an electron transfer chain functioning in an early step of cytosolic Fe-S biogenesis, facilitating the de novo assembly of a [4Fe-4S] cluster on the cytosolic Fe-S scaffold complex. Electrons are transferred from NADPH via a FAD- and FMN-containing diflavin oxidoreductase. Together with the diflavin oxidoreductase, also required for the assembly of the diferric tyrosyl radical cofactor of ribonucleotide reductase (RNR), probably by providing electrons for reduction during radical cofactor maturation in the catalytic small subunit. The chain is Anamorsin homolog from Drosophila simulans (Fruit fly).